Here is a 298-residue protein sequence, read N- to C-terminus: Probable endonuclease 4 (298 aa).

The Zn(2+) site is built by histidine 69, histidine 111, glutamate 146, aspartate 180, histidine 183, histidine 215, aspartate 228, histidine 230, and glutamate 260.

This sequence belongs to the AP endonuclease 2 family. Requires Zn(2+) as cofactor.

The enzyme catalyses Endonucleolytic cleavage to 5'-phosphooligonucleotide end-products.. Its function is as follows. Endonuclease IV plays a role in DNA repair. It cleaves phosphodiester bonds at apurinic or apyrimidinic (AP) sites, generating a 3'-hydroxyl group and a 5'-terminal sugar phosphate. The protein is Probable endonuclease 4 of Bacillus mycoides (strain KBAB4) (Bacillus weihenstephanensis).